Consider the following 363-residue polypeptide: 3-dehydroquinate synthase (363 aa).

Residues 72–77 (SGEKEK), 130–131 (TT), lysine 142, and lysine 151 contribute to the NAD(+) site. Residues glutamate 184, histidine 247, and histidine 264 each contribute to the Zn(2+) site.

This sequence belongs to the sugar phosphate cyclases superfamily. Dehydroquinate synthase family. Co(2+) is required as a cofactor. It depends on Zn(2+) as a cofactor. Requires NAD(+) as cofactor.

Its subcellular location is the cytoplasm. The catalysed reaction is 7-phospho-2-dehydro-3-deoxy-D-arabino-heptonate = 3-dehydroquinate + phosphate. It functions in the pathway metabolic intermediate biosynthesis; chorismate biosynthesis; chorismate from D-erythrose 4-phosphate and phosphoenolpyruvate: step 2/7. Functionally, catalyzes the conversion of 3-deoxy-D-arabino-heptulosonate 7-phosphate (DAHP) to dehydroquinate (DHQ). This Bacillus thuringiensis (strain Al Hakam) protein is 3-dehydroquinate synthase.